A 666-amino-acid polypeptide reads, in one-letter code: Endogenous retrovirus group K member 6 Gag polyprotein (666 aa).

G2 carries the N-myristoyl glycine lipid modification. Residues 165–264 (GKGPELVGPS…APPSRQGSKL (100 aa)) are disordered. A compositionally biased stretch (pro residues) spans 232 to 247 (GMPPAPQGRAPYPQPP). 2 consecutive CCHC-type zinc fingers follow at residues 544 to 561 (RKCYNCGQIGHLKKNCPV) and 580 to 597 (DLCPRCKKGKHWASQCRS). The segment at 598–642 (KFDKNGQPLSGNEQRGQPQAPQQTGAFPIQPFVPQGFQGQQPPLS) is disordered. Over residues 604 to 622 (QPLSGNEQRGQPQAPQQTG) the composition is skewed to polar residues. Positions 624-640 (FPIQPFVPQGFQGQQPP) are enriched in low complexity.

Belongs to the beta type-B retroviral Gag protein family. HERV class-II K(HML-2) gag subfamily. Post-translationally, myristoylation is essential for retroviral assembly. Alteration of the glycine residue leads to a block in the budding of particles and an accumulation of Gag inside the cell. In terms of processing, specific enzymatic cleavages may yield mature proteins.

It is found in the cell membrane. In terms of biological role, the products of the Gag polyproteins of infectious retroviruses perform highly complex orchestrated tasks during the assembly, budding, maturation, and infection stages of the viral replication cycle. During viral assembly, the proteins form membrane associations and self-associations that ultimately result in budding of an immature virion from the infected cell. Gag precursors also function during viral assembly to selectively bind and package two plus strands of genomic RNA. Endogenous Gag proteins may have kept, lost or modified their original function during evolution. This is Endogenous retrovirus group K member 6 Gag polyprotein (ERVK-6) from Homo sapiens (Human).